The following is a 156-amino-acid chain: Ribosomal RNA large subunit methyltransferase H (156 aa).

Residues leucine 73, glycine 104, and 123-128 contribute to the S-adenosyl-L-methionine site; that span reads LSSLTL.

This sequence belongs to the RNA methyltransferase RlmH family. As to quaternary structure, homodimer.

It is found in the cytoplasm. It catalyses the reaction pseudouridine(1915) in 23S rRNA + S-adenosyl-L-methionine = N(3)-methylpseudouridine(1915) in 23S rRNA + S-adenosyl-L-homocysteine + H(+). Functionally, specifically methylates the pseudouridine at position 1915 (m3Psi1915) in 23S rRNA. In Ralstonia nicotianae (strain ATCC BAA-1114 / GMI1000) (Ralstonia solanacearum), this protein is Ribosomal RNA large subunit methyltransferase H.